The chain runs to 201 residues: ATP-dependent Clp protease proteolytic subunit 2 (201 aa).

The Nucleophile role is filled by serine 98. Histidine 123 is a catalytic residue.

Belongs to the peptidase S14 family. Fourteen ClpP subunits assemble into 2 heptameric rings which stack back to back to give a disk-like structure with a central cavity, resembling the structure of eukaryotic proteasomes.

Its subcellular location is the cytoplasm. The catalysed reaction is Hydrolysis of proteins to small peptides in the presence of ATP and magnesium. alpha-casein is the usual test substrate. In the absence of ATP, only oligopeptides shorter than five residues are hydrolyzed (such as succinyl-Leu-Tyr-|-NHMec, and Leu-Tyr-Leu-|-Tyr-Trp, in which cleavage of the -Tyr-|-Leu- and -Tyr-|-Trp bonds also occurs).. Its function is as follows. Cleaves peptides in various proteins in a process that requires ATP hydrolysis. Has a chymotrypsin-like activity. Plays a major role in the degradation of misfolded proteins. The sequence is that of ATP-dependent Clp protease proteolytic subunit 2 from Rhizobium johnstonii (strain DSM 114642 / LMG 32736 / 3841) (Rhizobium leguminosarum bv. viciae).